The sequence spans 391 residues: MSKRRVVVGMSGGVDSSVTAWLLKEQGYDVVGLFMKNWEDDDDGEYCSTRQDWIDVVSVADLIGIDVEAVNFAAEYKDRVFAEFLREYSAGRTPNPDVLCNAEIKFKAFLDHAMSLDAEMIATGHYARVRERDGRFELLKAFDHTKDQSYFLHRLNQAQLSKTMFPLGEIPKTKVREIAAQIGLPNAKKKDSTGICFIGERPFRDFLNRYLPTKPGPMKTPDGKVVGEHIGLAFYTFGQRKGIGLGGSKDGNGDPWFVAAKDIASNTLYVVQGHDHPWLLSRELVAGNVSWVAGEPPADGFACGAKTRYRQADAACVFGGAATGAAAAGPAGEARFSLAFDDAQWAVTPGQSAVLYDGEICLGGGIIESAATGQPGQATSAGHAPALAEAR.

Residues 9 to 16 (GMSGGVDS) and Met-35 each bind ATP. The interval 95-97 (NPD) is interaction with target base in tRNA. The Nucleophile role is filled by Cys-100. Cys-100 and Cys-196 are joined by a disulfide. Residue Gly-124 coordinates ATP. The segment at 146–148 (KDQ) is interaction with tRNA. The Cysteine persulfide intermediate role is filled by Cys-196. The tract at residues 308–309 (RY) is interaction with tRNA.

The protein belongs to the MnmA/TRMU family.

It localises to the cytoplasm. It catalyses the reaction S-sulfanyl-L-cysteinyl-[protein] + uridine(34) in tRNA + AH2 + ATP = 2-thiouridine(34) in tRNA + L-cysteinyl-[protein] + A + AMP + diphosphate + H(+). Functionally, catalyzes the 2-thiolation of uridine at the wobble position (U34) of tRNA, leading to the formation of s(2)U34. The polypeptide is tRNA-specific 2-thiouridylase MnmA (Burkholderia orbicola (strain MC0-3)).